A 191-amino-acid chain; its full sequence is 7-methyl-GTP pyrophosphatase (191 aa).

Asp-70 serves as the catalytic Proton acceptor.

This sequence belongs to the Maf family. YceF subfamily. Requires a divalent metal cation as cofactor.

The protein localises to the cytoplasm. It carries out the reaction N(7)-methyl-GTP + H2O = N(7)-methyl-GMP + diphosphate + H(+). In terms of biological role, nucleoside triphosphate pyrophosphatase that hydrolyzes 7-methyl-GTP (m(7)GTP). May have a dual role in cell division arrest and in preventing the incorporation of modified nucleotides into cellular nucleic acids. This chain is 7-methyl-GTP pyrophosphatase, found in Xanthomonas oryzae pv. oryzae (strain KACC10331 / KXO85).